The following is a 98-amino-acid chain: MSMVYINLFLAFIMSLMGLLVYRSHLMSSLLCLEGMMLSLFIMISITILSNHFTLASMAPIILLVFAACEAALGLSLLVMVSNTYGTDYVQNLNLLQC.

Transmembrane regions (helical) follow at residues methionine 1–valine 21, serine 29–leucine 49, and isoleucine 61–valine 81.

The protein belongs to the complex I subunit 4L family. In terms of assembly, core subunit of respiratory chain NADH dehydrogenase (Complex I) which is composed of 45 different subunits.

It localises to the mitochondrion inner membrane. It carries out the reaction a ubiquinone + NADH + 5 H(+)(in) = a ubiquinol + NAD(+) + 4 H(+)(out). Its function is as follows. Core subunit of the mitochondrial membrane respiratory chain NADH dehydrogenase (Complex I) which catalyzes electron transfer from NADH through the respiratory chain, using ubiquinone as an electron acceptor. Part of the enzyme membrane arm which is embedded in the lipid bilayer and involved in proton translocation. The protein is NADH-ubiquinone oxidoreductase chain 4L (MT-ND4L) of Mephitis mephitis (Striped skunk).